Reading from the N-terminus, the 432-residue chain is Adenylosuccinate synthetase (432 aa).

Residues 13 to 19 (GDEGKGK) and 41 to 43 (GHT) each bind GTP. Asp-14 acts as the Proton acceptor in catalysis. Mg(2+) contacts are provided by Asp-14 and Gly-41. IMP-binding positions include 14 to 17 (DEGK), 39 to 42 (NAGH), Thr-130, Arg-144, Gln-225, Thr-240, and Arg-304. Residue His-42 is the Proton donor of the active site. 300–306 (AVTGRPR) serves as a coordination point for substrate. GTP is bound by residues Arg-306, 332-334 (KLD), and 415-417 (STG).

This sequence belongs to the adenylosuccinate synthetase family. In terms of assembly, homodimer. The cofactor is Mg(2+).

The protein localises to the cytoplasm. The enzyme catalyses IMP + L-aspartate + GTP = N(6)-(1,2-dicarboxyethyl)-AMP + GDP + phosphate + 2 H(+). Its pathway is purine metabolism; AMP biosynthesis via de novo pathway; AMP from IMP: step 1/2. In terms of biological role, plays an important role in the de novo pathway of purine nucleotide biosynthesis. Catalyzes the first committed step in the biosynthesis of AMP from IMP. The chain is Adenylosuccinate synthetase from Glaesserella parasuis serovar 5 (strain SH0165) (Haemophilus parasuis).